Consider the following 245-residue polypeptide: NAD-dependent protein deacetylase (245 aa).

One can recognise a Deacetylase sirtuin-type domain in the interval 1-245 (MIFVQQFEEV…EFVEGLSSMK (245 aa)). The NAD(+) site is built by Ala-26, Thr-30, Phe-37, Arg-38, Gln-105, Ile-107, Asp-108, and His-123. Residue Phe-37 participates in nicotinamide binding. The nicotinamide site is built by Ile-107 and Asp-108. Catalysis depends on His-123, which acts as the Proton acceptor. Zn(2+) contacts are provided by Cys-131, Cys-134, Cys-151, and Cys-154. NAD(+)-binding residues include Thr-190, Ser-191, Asn-216, and Ile-234.

This sequence belongs to the sirtuin family. Class U subfamily. It depends on Zn(2+) as a cofactor.

Its subcellular location is the cytoplasm. The catalysed reaction is N(6)-acetyl-L-lysyl-[protein] + NAD(+) + H2O = 2''-O-acetyl-ADP-D-ribose + nicotinamide + L-lysyl-[protein]. Functionally, NAD-dependent protein deacetylase which modulates the activities of several enzymes which are inactive in their acetylated form. This chain is NAD-dependent protein deacetylase, found in Bacillus cereus (strain ATCC 14579 / DSM 31 / CCUG 7414 / JCM 2152 / NBRC 15305 / NCIMB 9373 / NCTC 2599 / NRRL B-3711).